The primary structure comprises 133 residues: Homeobox protein HD-5 (133 aa).

Positions 34–93 (SKRSRLKLSGQQIDVLESNFKIDSHPNSATKSLLSNALSIPLKNIQIWFQNRRAKEKTAR) form a DNA-binding region, homeobox. Positions 86-109 (RAKEKTARDGGRRRSGNAEIEDGE) are disordered.

It is found in the nucleus. The chain is Homeobox protein HD-5 (HD-5) from Encephalitozoon cuniculi (strain GB-M1) (Microsporidian parasite).